A 124-amino-acid chain; its full sequence is UPF0344 protein OB1184 (124 aa).

The next 4 membrane-spanning stretches (helical) occupy residues 3–23, 33–53, 62–82, and 104–124; these read HMHI…LVMY, IIHM…GILT, MPIL…VAMM, and IALV…FLFI.

It belongs to the UPF0344 family.

The protein localises to the cell membrane. In Oceanobacillus iheyensis (strain DSM 14371 / CIP 107618 / JCM 11309 / KCTC 3954 / HTE831), this protein is UPF0344 protein OB1184.